The following is a 359-amino-acid chain: CMP-N-acetylneuraminate-poly-alpha-2,8-sialyltransferase (359 aa).

Over 1-7 (MRSIRKR) the chain is Cytoplasmic. A helical; Signal-anchor for type II membrane protein membrane pass occupies residues 8 to 20 (WTICTISLLLIFY). Residues 21-359 (KTKEIARTEE…KLTTGKCVKQ (339 aa)) are Lumenal-facing. N-linked (GlcNAc...) asparagine glycosylation is found at Asn50, Asn74, and Asn119. 2 disulfides stabilise this stretch: Cys142–Cys292 and Cys156–Cys356. CMP-N-acetyl-beta-neuraminate contacts are provided by Asn147 and Asn170. N-linked (GlcNAc...) asparagine glycans are attached at residues Asn204 and Asn219. 4 residues coordinate CMP-N-acetyl-beta-neuraminate: Ser279, Thr280, Gly281, and Trp301. The active-site Proton donor/acceptor is the His331.

It belongs to the glycosyltransferase 29 family. Post-translationally, autopolysialylated.

The protein resides in the golgi apparatus membrane. Its subcellular location is the secreted. It carries out the reaction [N-acetyl-alpha-D-neuraminosyl-(2-&gt;8)](n) + CMP-N-acetyl-beta-neuraminate = [N-acetyl-alpha-D-neuraminosyl-(2-&gt;8)](n+1) + CMP + H(+). Its function is as follows. Catalyzes the transfer of a sialic acid from a CMP-linked sialic acid donor onto a terminal alpha-2,3-, alpha-2,6-, or alpha-2,8-linked sialic acid of an N-linked glycan protein acceptor through alpha-2,8-linkages. Therefore, participates in polysialic acid synthesis on various sialylated N-acetyllactosaminyl oligosaccharides, including NCAM1 N-glycans, FETUB N-glycans and AHSG. It is noteworthy that alpha-2,3-linked sialic acid is apparently a better acceptor than alpha-2,6-linked sialic acid. This chain is CMP-N-acetylneuraminate-poly-alpha-2,8-sialyltransferase (ST8SIA4), found in Pan troglodytes (Chimpanzee).